The chain runs to 41 residues: Augerpeptide hhe6.1 (41 aa).

3 disulfides stabilise this stretch: Cys11-Cys32, Cys18-Cys35, and Cys31-Cys40.

Expressed by the venom duct.

The protein localises to the secreted. This is Augerpeptide hhe6.1 from Hastula hectica (Sea snail).